The following is a 932-amino-acid chain: DNA mismatch repair protein MutS (932 aa).

Residue 615–622 (GPNMAGKS) coordinates ATP.

It belongs to the DNA mismatch repair MutS family.

In terms of biological role, this protein is involved in the repair of mismatches in DNA. It is possible that it carries out the mismatch recognition step. This protein has a weak ATPase activity. This chain is DNA mismatch repair protein MutS, found in Clostridium botulinum (strain Loch Maree / Type A3).